Consider the following 131-residue polypeptide: UPF0102 protein YraN (131 aa).

Positions 1–19 are enriched in polar residues; it reads MATVPTRSGSPRQLTTKQT. Residues 1–21 are disordered; the sequence is MATVPTRSGSPRQLTTKQTGD.

This sequence belongs to the UPF0102 family.

This Escherichia coli O7:K1 (strain IAI39 / ExPEC) protein is UPF0102 protein YraN.